The chain runs to 264 residues: NAD-capped RNA hydrolase NudC (264 aa).

Residues Cys99 and Cys102 each coordinate Zn(2+). Glu112 serves as a coordination point for substrate. Cys117 and Cys120 together coordinate Zn(2+). Tyr125 lines the substrate pocket. The Nudix hydrolase domain maps to 126-253 (PVICPSIIVA…TIARKLIHVT (128 aa)). A divalent metal cation contacts are provided by Ala162, Glu178, and Glu182. The Nudix box signature appears at 163 to 184 (GFVEVGETFEQAVQREVFEETG). 196 to 203 (QPWAFPNS) contributes to the substrate binding site. Glu223 lines the a divalent metal cation pocket. Ala246 contributes to the substrate binding site.

It belongs to the Nudix hydrolase family. NudC subfamily. Homodimer. Mg(2+) serves as cofactor. The cofactor is Mn(2+). Zn(2+) is required as a cofactor.

It carries out the reaction a 5'-end NAD(+)-phospho-ribonucleoside in mRNA + H2O = a 5'-end phospho-adenosine-phospho-ribonucleoside in mRNA + beta-nicotinamide D-ribonucleotide + 2 H(+). The enzyme catalyses NAD(+) + H2O = beta-nicotinamide D-ribonucleotide + AMP + 2 H(+). It catalyses the reaction NADH + H2O = reduced beta-nicotinamide D-ribonucleotide + AMP + 2 H(+). Its function is as follows. mRNA decapping enzyme that specifically removes the nicotinamide adenine dinucleotide (NAD) cap from a subset of mRNAs by hydrolyzing the diphosphate linkage to produce nicotinamide mononucleotide (NMN) and 5' monophosphate mRNA. The NAD-cap is present at the 5'-end of some mRNAs and stabilizes RNA against 5'-processing. Has preference for mRNAs with a 5'-end purine. Catalyzes the hydrolysis of a broad range of dinucleotide pyrophosphates. The chain is NAD-capped RNA hydrolase NudC from Haemophilus influenzae (strain ATCC 51907 / DSM 11121 / KW20 / Rd).